The chain runs to 161 residues: 18.1 kDa class I heat shock protein (161 aa).

Positions 47 to 161 (ETAAFAGARI…PDVKSIQVTG (115 aa)) constitute a sHSP domain.

Belongs to the small heat shock protein (HSP20) family. In terms of assembly, may form oligomeric structures.

The protein localises to the cytoplasm. This chain is 18.1 kDa class I heat shock protein (HSP18.1), found in Oryza sativa subsp. japonica (Rice).